Consider the following 140-residue polypeptide: NADH-quinone oxidoreductase subunit I (140 aa).

4Fe-4S ferredoxin-type domains lie at 42–71 (GSFT…VGSI) and 81–110 (ASYE…FNQE). [4Fe-4S] cluster contacts are provided by cysteine 51, cysteine 54, cysteine 57, cysteine 61, cysteine 90, cysteine 93, cysteine 96, and cysteine 100.

The protein belongs to the complex I 23 kDa subunit family. As to quaternary structure, NDH-1 is composed of 14 different subunits. Subunits NuoA, H, J, K, L, M, N constitute the membrane sector of the complex. [4Fe-4S] cluster is required as a cofactor.

It localises to the cell membrane. The enzyme catalyses a quinone + NADH + 5 H(+)(in) = a quinol + NAD(+) + 4 H(+)(out). Its function is as follows. NDH-1 shuttles electrons from NADH, via FMN and iron-sulfur (Fe-S) centers, to quinones in the respiratory chain. The immediate electron acceptor for the enzyme in this species is believed to be ubiquinone. Couples the redox reaction to proton translocation (for every two electrons transferred, four hydrogen ions are translocated across the cytoplasmic membrane), and thus conserves the redox energy in a proton gradient. This chain is NADH-quinone oxidoreductase subunit I, found in Carboxydothermus hydrogenoformans (strain ATCC BAA-161 / DSM 6008 / Z-2901).